Here is a 256-residue protein sequence, read N- to C-terminus: DNA repair protein RecO (256 aa).

The protein belongs to the RecO family.

Involved in DNA repair and RecF pathway recombination. This is DNA repair protein RecO from Clostridium novyi (strain NT).